Reading from the N-terminus, the 266-residue chain is Small ribosomal subunit protein eS1 (266 aa).

The interval aspartate 237 to valine 266 is disordered.

This sequence belongs to the eukaryotic ribosomal protein eS1 family. As to quaternary structure, component of the small ribosomal subunit. Mature ribosomes consist of a small (40S) and a large (60S) subunit. The 40S subunit contains about 33 different proteins and 1 molecule of RNA (18S). The 60S subunit contains about 49 different proteins and 3 molecules of RNA (28S, 5.8S and 5S).

The protein localises to the cytoplasm. The protein is Small ribosomal subunit protein eS1 of Lysiphlebus testaceipes (Greenbugs aphid parastoid).